Here is a 245-residue protein sequence, read N- to C-terminus: Large ribosomal subunit protein uL2 (245 aa).

A disordered region spans residues 198–245; the sequence is VSHPHGGGSHKRPGKPTTVARTAPPGQKVGHIAARKTGRAKRRAATKR. Basic residues predominate over residues 230–245; sequence AARKTGRAKRRAATKR.

This sequence belongs to the universal ribosomal protein uL2 family. As to quaternary structure, part of the 50S ribosomal subunit. Forms a bridge to the 30S subunit in the 70S ribosome.

Its function is as follows. One of the primary rRNA binding proteins. Required for association of the 30S and 50S subunits to form the 70S ribosome, for tRNA binding and peptide bond formation. It has been suggested to have peptidyltransferase activity; this is somewhat controversial. Makes several contacts with the 16S rRNA in the 70S ribosome. The sequence is that of Large ribosomal subunit protein uL2 from Korarchaeum cryptofilum (strain OPF8).